Here is a 465-residue protein sequence, read N- to C-terminus: MSFLVAIVGRANVGKSTLFNVLTNSHDALVFDFEGVTRDRQYGQAKYDDLDYLVVDTGGISDKDVGFDEFMAKQSQIAIDEANLVFFVVDGRSGLTTGDEYVASLLRQKDKKVVVVVNKVDGTDEEAAMAEFYSFGFDKVFAISAAHRRNTQKLVDKFLKKPLNEYYQDYTQTQEHKEQQRHGIHFSLIGRPNVGKSTLTNRMLGEDRVVVFDMPGTTIDSVSIPFERHGQKYTIVDTAGVRKRGKVKQTLEKFSVIKTLQAIQDSNVVVAVVDARQGISDQDLSLIHFAIKNGRALVLAVNKWDGMTEEDRIQVKQDLKRKLFFLQDYVDIHFISALHGTNVGHVFESIDTAYACANKKITTADATCLMQLAVEAHSLPMVGKFRIKLKYAHVGGHNPPVIVIHGNQVSRLPNSYKRYLENFFREALDFRGTPIVFEFKQSENPFADRKNKRSKDEGSKSKKVK.

2 consecutive EngA-type G domains span residues 3–166 (FLVA…LNEY) and 184–358 (IHFS…ACAN). GTP-binding positions include 9 to 16 (GRANVGKS), 56 to 60 (DTGGI), 118 to 121 (NKVD), 190 to 197 (GRPNVGKS), 237 to 241 (DTAGV), and 302 to 305 (NKWD). Residues 359–443 (KKITTADATC…PIVFEFKQSE (85 aa)) form the KH-like domain. The interval 446–465 (FADRKNKRSKDEGSKSKKVK) is disordered.

The protein belongs to the TRAFAC class TrmE-Era-EngA-EngB-Septin-like GTPase superfamily. EngA (Der) GTPase family. In terms of assembly, associates with the 50S ribosomal subunit.

In terms of biological role, GTPase that plays an essential role in the late steps of ribosome biogenesis. This Francisella tularensis subsp. mediasiatica (strain FSC147) protein is GTPase Der.